Consider the following 331-residue polypeptide: Thioredoxin-like fold domain-containing protein MRL7, chloroplastic (331 aa).

The transit peptide at 1–59 (MSFFAVACSAPRSSMLLTGLNSSFSDMHRSPLFVFPVTISSRSVKRFAAVSSDSVLDPE) directs the protein to the chloroplast. 2 disordered regions span residues 52–105 (SDSV…ADAV) and 141–160 (GVDEEEEEEEEMVVEEEDPD). A compositionally biased stretch (acidic residues) spans 142–160 (VDEEEEEEEEMVVEEEDPD).

In terms of assembly, component of the transcriptionally active chromosome (TAC) complexes. Interacts with FSD2 and PRDA1. Interacts with FSD3 and CITRX/TRXZ. Binds to PTAC12/HMR/PAP5. Expressed in leaves, shoots, stems, cauline leaves, flower buds, flowers and siliques.

It localises to the plastid. It is found in the chloroplast. The protein resides in the chloroplast stroma. Its subcellular location is the chloroplast nucleoid. The protein localises to the nucleus. Plays an essential role in early steps of chloroplast development. Involved in the regulation of plastid gene expression. May positively regulate plastid-encoded RNA polymerase (PEP) activity through binding to FSD3 and CITRX/TRXZ. Involved in redox-mediated regulation of chloroplast development. Possesses disulfide reductase activity in vitro. Required for the proper function of the plastid transcriptional machinery and protein accumulation in thylakoid membranes. May function as molecular chaperone to ensure proper organization of the nucleoids in chloroplasts. May mediate some aspect of thylakoid structure or function that controls non-photochemical quenching (NPQ). Participates in the early light signaling events of photobody biogenesis in chloroplasts. May mediate the degradation of two repressors of chloroplast biogenesis, PIF1 and PIF3 in nucleus. Collaboratively with PTAC12/HMR/PAP5, involved in the regulation of thermoresponsive responses via the stabilization of PIF4 in the daytime to initiate thermomorphogenesis. The chain is Thioredoxin-like fold domain-containing protein MRL7, chloroplastic from Arabidopsis thaliana (Mouse-ear cress).